The sequence spans 326 residues: uncharacterized protein (326 aa).

Position 132 (Ser-132) interacts with substrate. Tyr-157 acts as the Proton acceptor in catalysis.

The protein belongs to the NAD(P)-dependent epimerase/dehydratase family. dTDP-glucose dehydratase subfamily.

This is an uncharacterized protein from Methanocaldococcus jannaschii (strain ATCC 43067 / DSM 2661 / JAL-1 / JCM 10045 / NBRC 100440) (Methanococcus jannaschii).